The primary structure comprises 735 residues: Coiled-coil quantitatively-enriched protein 1 (735 aa).

Residues 514 to 719 (AAVQYLQRRL…TLKILEQKSL (206 aa)) adopt a coiled-coil conformation.

Interacts (during meiosis) with pcp1. Interacts with clr3, pot1, taz1 and tpz1.

Its subcellular location is the nucleus. The protein localises to the nucleoplasm. It localises to the chromosome. It is found in the telomere. Functionally, component of the meiotic bouquet that facilitates meiotic nuclear reorganization of the telomeres to the centrosome. Links telomeres to the meiotic centrosome component pcp1. Essential for the formation of normal telomere clusters during meiotic prophase. Required for telomere length regulation and chromosome segregation. Required for proper positioning of nucleosomes at heterochromatic loci and for transcriptional gene silencing (TGS) function of the Snf2/Hdac-containing repressor complex (SHREC). This is Coiled-coil quantitatively-enriched protein 1 (ccq1) from Schizosaccharomyces pombe (strain 972 / ATCC 24843) (Fission yeast).